We begin with the raw amino-acid sequence, 66 residues long: ATP synthase F(0) complex subunit 8 (66 aa).

An N-formylmethionine modification is found at Met1. The helical transmembrane segment at 8-24 (TWLTMILSMFLTLFIIF) threads the bilayer. Position 54 is an N6-acetyllysine; alternate (Lys54). Lys54 carries the post-translational modification N6-succinyllysine; alternate. Lys57 bears the N6-acetyllysine mark.

The protein belongs to the ATPase protein 8 family. As to quaternary structure, component of the ATP synthase complex composed at least of ATP5F1A/subunit alpha, ATP5F1B/subunit beta, ATP5MC1/subunit c (homooctomer), MT-ATP6/subunit a, MT-ATP8/subunit 8, ATP5ME/subunit e, ATP5MF/subunit f, ATP5MG/subunit g, ATP5MK/subunit k, ATP5MJ/subunit j, ATP5F1C/subunit gamma, ATP5F1D/subunit delta, ATP5F1E/subunit epsilon, ATP5PF/subunit F6, ATP5PB/subunit b, ATP5PD/subunit d, ATP5PO/subunit OSCP. ATP synthase complex consists of a soluble F(1) head domain (subunits alpha(3) and beta(3)) - the catalytic core - and a membrane F(0) domain - the membrane proton channel (subunits c, a, 8, e, f, g, k and j). These two domains are linked by a central stalk (subunits gamma, delta, and epsilon) rotating inside the F1 region and a stationary peripheral stalk (subunits F6, b, d, and OSCP). Interacts with PRICKLE3.

The protein resides in the mitochondrion membrane. In terms of biological role, subunit 8, of the mitochondrial membrane ATP synthase complex (F(1)F(0) ATP synthase or Complex V) that produces ATP from ADP in the presence of a proton gradient across the membrane which is generated by electron transport complexes of the respiratory chain. ATP synthase complex consist of a soluble F(1) head domain - the catalytic core - and a membrane F(1) domain - the membrane proton channel. These two domains are linked by a central stalk rotating inside the F(1) region and a stationary peripheral stalk. During catalysis, ATP synthesis in the catalytic domain of F(1) is coupled via a rotary mechanism of the central stalk subunits to proton translocation. In vivo, can only synthesize ATP although its ATP hydrolase activity can be activated artificially in vitro. Part of the complex F(0) domain. The chain is ATP synthase F(0) complex subunit 8 from Bos taurus (Bovine).